A 257-amino-acid polypeptide reads, in one-letter code: Ribonuclease HII (257 aa).

Positions 72–257 (TYIAGIDEVG…FAPIKDMIQK (186 aa)) constitute an RNase H type-2 domain. Positions 78, 79, and 170 each coordinate a divalent metal cation.

This sequence belongs to the RNase HII family. Mn(2+) serves as cofactor. Requires Mg(2+) as cofactor.

The protein localises to the cytoplasm. It carries out the reaction Endonucleolytic cleavage to 5'-phosphomonoester.. Its function is as follows. Endonuclease that specifically degrades the RNA of RNA-DNA hybrids. The polypeptide is Ribonuclease HII (Bacillus cereus (strain AH820)).